Reading from the N-terminus, the 151-residue chain is Testis-expressed protein 29 (151 aa).

At 1–56 the chain is on the extracellular side; sequence MEYVLEVKNSPRHLLKQFTVCDVPLYDICDYNVSRDRCQELGCCFYEGVCYKKAVP. The helical transmembrane segment at 57-77 threads the bilayer; that stretch reads IYIHVFSALIVIIAGAFVITI. Residues 78–151 are Cytoplasmic-facing; it reads IYRVIQESRK…TITEAEETED (74 aa). Residues 100 to 151 are disordered; the sequence is KSSEKAELASSSSKLGLKPASPGPPSAGPSMKSDEDKDDVTGTITEAEETED. Low complexity predominate over residues 107–119; sequence LASSSSKLGLKPA.

It localises to the membrane. This chain is Testis-expressed protein 29 (TEX29), found in Homo sapiens (Human).